The chain runs to 971 residues: Translation initiation factor IF-2 (971 aa).

A compositionally biased stretch (basic and acidic residues) spans 49-63 (HLRKSHGATDGDKRK). 2 disordered regions span residues 49-86 (HLRK…ARTI) and 101-385 (DVAE…APTE). Residues 105–114 (GAEQGQAQVA) are compositionally biased toward low complexity. Over residues 121-177 (ELKRREEEARREAELLEKQAQELRERQERLEREEAERRAREEAAEAQRRRAEEEAAA) the composition is skewed to basic and acidic residues. Low complexity predominate over residues 178-209 (KRAAAAAVEAQQVAAQQAAEAQQETAGAQSAQ). Residues 210 to 261 (DEARAAAERAAQREAAKKAEDAAREAADKTRAEQEEIRKRREAAEAEARAIR) show a composition bias toward basic and acidic residues. Positions 277–286 (PPKPVEPPKP) are enriched in pro residues. Positions 298–325 (KPAGASAARPAVKKPAGAAPATTAPAGA) are enriched in low complexity. Over residues 355–368 (SSGGVDRGWRGGPK) the composition is skewed to gly residues. The tr-type G domain occupies 471–640 (PRPPVVTVMG…LLQAEVLELK (170 aa)). Residues 480-487 (GHVDHGKT) form a G1 region. Residue 480–487 (GHVDHGKT) coordinates GTP. Positions 505–509 (GITQH) are G2. Positions 526–529 (DTPG) are G3. Residues 526 to 530 (DTPGH) and 580 to 583 (NKID) contribute to the GTP site. The segment at 580–583 (NKID) is G4. The G5 stretch occupies residues 616 to 618 (SAK).

It belongs to the TRAFAC class translation factor GTPase superfamily. Classic translation factor GTPase family. IF-2 subfamily.

The protein resides in the cytoplasm. Its function is as follows. One of the essential components for the initiation of protein synthesis. Protects formylmethionyl-tRNA from spontaneous hydrolysis and promotes its binding to the 30S ribosomal subunits. Also involved in the hydrolysis of GTP during the formation of the 70S ribosomal complex. The polypeptide is Translation initiation factor IF-2 (Burkholderia ambifaria (strain ATCC BAA-244 / DSM 16087 / CCUG 44356 / LMG 19182 / AMMD) (Burkholderia cepacia (strain AMMD))).